We begin with the raw amino-acid sequence, 176 residues long: Cell division protein ZapC (176 aa).

The protein belongs to the ZapC family. In terms of assembly, interacts directly with FtsZ.

The protein resides in the cytoplasm. Functionally, contributes to the efficiency of the cell division process by stabilizing the polymeric form of the cell division protein FtsZ. Acts by promoting interactions between FtsZ protofilaments and suppressing the GTPase activity of FtsZ. The sequence is that of Cell division protein ZapC from Pseudoalteromonas translucida (strain TAC 125).